Reading from the N-terminus, the 310-residue chain is p-hydroxybenzoic acid efflux pump subunit AaeA (310 aa).

The chain crosses the membrane as a helical span at residues Ala12–Tyr32.

It belongs to the membrane fusion protein (MFP) (TC 8.A.1) family.

It is found in the cell inner membrane. Forms an efflux pump with AaeB. This Salmonella arizonae (strain ATCC BAA-731 / CDC346-86 / RSK2980) protein is p-hydroxybenzoic acid efflux pump subunit AaeA.